The chain runs to 150 residues: Large ribosomal subunit protein uL11 (150 aa).

It belongs to the universal ribosomal protein uL11 family. In terms of assembly, part of the ribosomal stalk of the 50S ribosomal subunit. Interacts with L10 and the large rRNA to form the base of the stalk. L10 forms an elongated spine to which L12 dimers bind in a sequential fashion forming a multimeric L10(L12)X complex. One or more lysine residues are methylated.

Forms part of the ribosomal stalk which helps the ribosome interact with GTP-bound translation factors. The chain is Large ribosomal subunit protein uL11 from Jannaschia sp. (strain CCS1).